A 1050-amino-acid chain; its full sequence is Antibiotic efflux pump membrane transporter ArpB (1050 aa).

Helical transmembrane passes span 10–30 (IFAW…ILKL), 339–359 (GVIH…YLFL), 370–390 (MTVP…GFSI), 393–413 (LTMF…IVVV), 440–460 (GALV…AFFG), 472–492 (ITIV…TPAL), 539–559 (VPFL…FARI), 871–891 (MPAL…ALYE), 893–913 (WSIP…ALIA), 923–943 (VYFL…AILI), 972–992 (IIMT…ASGA), and 1004–1024 (VIGG…LFFV).

This sequence belongs to the resistance-nodulation-cell division (RND) (TC 2.A.6) family.

Its subcellular location is the cell inner membrane. The inner membrane transporter component of an antibiotic efflux pump. Confers resistance to numerous structurally unrelated antibiotics such as carbenicillin, chloramphenicol, erythromycin, novobiocin, streptomycin and tetracycline. Is not involved in organic solvent efflux. In Pseudomonas putida (Arthrobacter siderocapsulatus), this protein is Antibiotic efflux pump membrane transporter ArpB (arpB).